The following is a 273-amino-acid chain: Homeobox protein Nkx-2.2 (273 aa).

2 disordered regions span residues 1 to 56 and 91 to 131; these read MSLT…LDAV and AASA…KRKR. Residues 20 to 38 show a composition bias toward acidic residues; it reads DTNDEEGSVAEGPEEESEG. Residues 128–187 constitute a DNA-binding region (homeobox); it reads KRKRRVLFSKAQTYELERRFRQQRYLSAPEREHLASLIRLTPTQVKIWFQNHRYKMKRAR.

It belongs to the NK-2 homeobox family. In terms of assembly, interacts with OLIG2.

The protein resides in the nucleus. Its function is as follows. Transcriptional activator involved in the development of insulin-producting beta cells in the endocrine pancreas. May also be involved in specifying diencephalic neuromeric boundaries, and in controlling the expression of genes that play a role in axonal guidance. Binds to elements within the NEUROD1 promoter. This Mesocricetus auratus (Golden hamster) protein is Homeobox protein Nkx-2.2 (NKX2-2).